The chain runs to 305 residues: Triplex capsid protein 2 (305 aa).

The protein belongs to the herpesviridae TRX2 protein family. In terms of assembly, interacts with TRX1 and major capisd protein/MCP.

It is found in the virion. Its subcellular location is the host nucleus. In terms of biological role, structural component of the T=16 icosahedral capsid. The capsid is composed of pentamers and hexamers of major capsid protein/MCP, which are linked together by heterotrimers called triplexes. These triplexes are formed by a single molecule of triplex protein 1/TRX1 and two copies of triplex protein 2/TRX2. Additionally, TRX1 is required for efficient transport of TRX2 to the nucleus, which is the site of capsid assembly. In Homo sapiens (Human), this protein is Triplex capsid protein 2.